The chain runs to 301 residues: Glycine--tRNA ligase alpha subunit (301 aa).

This sequence belongs to the class-II aminoacyl-tRNA synthetase family. As to quaternary structure, tetramer of two alpha and two beta subunits.

It is found in the cytoplasm. It catalyses the reaction tRNA(Gly) + glycine + ATP = glycyl-tRNA(Gly) + AMP + diphosphate. The protein is Glycine--tRNA ligase alpha subunit of Shewanella denitrificans (strain OS217 / ATCC BAA-1090 / DSM 15013).